We begin with the raw amino-acid sequence, 142 residues long: 3-hydroxyacyl-[acyl-carrier-protein] dehydratase FabZ (142 aa).

His-49 is a catalytic residue.

Belongs to the thioester dehydratase family. FabZ subfamily.

The protein localises to the cytoplasm. The catalysed reaction is a (3R)-hydroxyacyl-[ACP] = a (2E)-enoyl-[ACP] + H2O. Involved in unsaturated fatty acids biosynthesis. Catalyzes the dehydration of short chain beta-hydroxyacyl-ACPs and long chain saturated and unsaturated beta-hydroxyacyl-ACPs. This chain is 3-hydroxyacyl-[acyl-carrier-protein] dehydratase FabZ, found in Deinococcus geothermalis (strain DSM 11300 / CIP 105573 / AG-3a).